The chain runs to 132 residues: D-ribose pyranase (132 aa).

The Proton donor role is filled by His-20. Substrate-binding positions include Asp-28, His-99, and 121–123 (YSN).

It belongs to the RbsD / FucU family. RbsD subfamily. Homodecamer.

Its subcellular location is the cytoplasm. It carries out the reaction beta-D-ribopyranose = beta-D-ribofuranose. It functions in the pathway carbohydrate metabolism; D-ribose degradation; D-ribose 5-phosphate from beta-D-ribopyranose: step 1/2. Functionally, catalyzes the interconversion of beta-pyran and beta-furan forms of D-ribose. This chain is D-ribose pyranase, found in Lactococcus lactis subsp. cremoris (strain SK11).